The primary structure comprises 276 residues: Orotidine 5'-phosphate decarboxylase (276 aa).

Lys93 (proton donor) is an active-site residue.

Belongs to the OMP decarboxylase family. Type 2 subfamily.

It catalyses the reaction orotidine 5'-phosphate + H(+) = UMP + CO2. Its pathway is pyrimidine metabolism; UMP biosynthesis via de novo pathway; UMP from orotate: step 2/2. This is Orotidine 5'-phosphate decarboxylase from Halorubrum lacusprofundi (strain ATCC 49239 / DSM 5036 / JCM 8891 / ACAM 34).